The chain runs to 386 residues: HORMA domain-containing protein 1 (386 aa).

The HORMA domain maps to 24–224 (TQSLILVKRL…TPFHVLKVKV (201 aa)). 2 disordered regions span residues 237-274 (SIFKKQASKQPQTDEEKPDLSINDDLAQDNNGDRKRDD) and 289-386 (EDGN…TPLN). Residues 289-313 (EDGNLQSDDSQNSALADSQEKTSQA) are compositionally biased toward polar residues. Residues 329 to 343 (QKPDLELKNQKESAR) are compositionally biased toward basic and acidic residues.

The protein resides in the nucleus. The protein localises to the chromosome. In terms of biological role, plays a key role in meiotic progression by ensuring that sufficient numbers of processed DNA double-strand breaks (DSBs) are available for successful homology search, promoting synaptonemal-complex formation independently and playing key role in the male mid-pachytene checkpoint and the female meiotic prophase checkpoint. This Xenopus laevis (African clawed frog) protein is HORMA domain-containing protein 1 (hormad1).